Reading from the N-terminus, the 151-residue chain is Deoxyuridine 5'-triphosphate nucleotidohydrolase (151 aa).

Residues 70 to 72 (RSG), N83, 87 to 89 (LID), and M97 contribute to the substrate site.

Belongs to the dUTPase family. Requires Mg(2+) as cofactor.

It catalyses the reaction dUTP + H2O = dUMP + diphosphate + H(+). It participates in pyrimidine metabolism; dUMP biosynthesis; dUMP from dCTP (dUTP route): step 2/2. Its function is as follows. This enzyme is involved in nucleotide metabolism: it produces dUMP, the immediate precursor of thymidine nucleotides and it decreases the intracellular concentration of dUTP so that uracil cannot be incorporated into DNA. This Psychromonas ingrahamii (strain DSM 17664 / CCUG 51855 / 37) protein is Deoxyuridine 5'-triphosphate nucleotidohydrolase.